We begin with the raw amino-acid sequence, 182 residues long: Plasmolipin (182 aa).

The Cytoplasmic segment spans residues 1–35; it reads MAEFPSKVSTRTSSPAQGAEASVSALRPDLGFVRS. Residue S9 is modified to Phosphoserine. Residues 32–166 form the MARVEL domain; the sequence is FVRSRLGALM…SAFFSYQAWR (135 aa). Residues 36 to 56 traverse the membrane as a helical segment; sequence RLGALMLLQLVLGLLVWALIA. Over 57-68 the chain is Extracellular; it reads DTPYHLYPAYGW. The chain crosses the membrane as a helical span at residues 69 to 89; the sequence is VMFVAVFLWLVTIVLFNLYLF. The Cytoplasmic portion of the chain corresponds to 90–99; that stretch reads QLHMKLYMVP. A helical transmembrane segment spans residues 100-120; sequence WPLVLMIFNISATVLYITAFI. Residues 121–141 lie on the Extracellular side of the membrane; that stretch reads ACSAAVDLTSLRGTRPYNQRA. The chain crosses the membrane as a helical span at residues 142-162; it reads AASFFACLVMIAYGVSAFFSY. Over 163 to 182 the chain is Cytoplasmic; the sequence is QAWRGVGSNAATSQMAGGYA.

Belongs to the MAL family. In terms of assembly, forms oligomers. Phosphorylated.

It localises to the cell membrane. The protein resides in the myelin membrane. It is found in the apical cell membrane. The protein localises to the golgi apparatus. Its function is as follows. Main component of the myelin sheath that plays an important role in myelin membrane biogenesis and myelination. Plays an essential function in apical endocytosis. Regulates epithelial development through the regulation of apical endocytosis. Part of the intracellular machinery that mediates basolateral-to-apical transport of ICAM-1, an essential adhesion receptor in epithelial cells, from the subapical compartment in hepatic epithelial cells. This chain is Plasmolipin, found in Homo sapiens (Human).